We begin with the raw amino-acid sequence, 100 residues long: Mitochondrial import inner membrane translocase subunit Tim10 B (100 aa).

Positions Cys25 to Cys49 match the Twin CX3C motif motif. 2 disulfides stabilise this stretch: Cys25/Cys49 and Cys29/Cys45.

The protein belongs to the small Tim family. Component of the TIM22 complex, which core is composed of TIMM22, associated with TIMM10 (TIMM10A and/or TIMM10B), TIMM9, AGK and TIMM29.

It localises to the mitochondrion inner membrane. Its function is as follows. Component of the TIM22 complex, a complex that mediates the import and insertion of multi-pass transmembrane proteins into the mitochondrial inner membrane. The TIM22 complex forms a twin-pore translocase that uses the membrane potential as the external driving force. In the TIM22 complex, it may act as a docking point for the soluble 70 kDa complex that guides the target proteins in transit through the aqueous mitochondrial intermembrane space. In Rattus norvegicus (Rat), this protein is Mitochondrial import inner membrane translocase subunit Tim10 B (Timm10b).